Reading from the N-terminus, the 298-residue chain is Nucleotide-binding protein MLBr00563 (298 aa).

ATP is bound at residue 21 to 28; the sequence is GLSGAGRG. 72 to 75 provides a ligand contact to GTP; that stretch reads DVRS.

Belongs to the RapZ-like family.

Functionally, displays ATPase and GTPase activities. The protein is Nucleotide-binding protein MLBr00563 of Mycobacterium leprae (strain Br4923).